Here is a 199-residue protein sequence, read N- to C-terminus: Putative peroxiredoxin ycf42 (199 aa).

A Thioredoxin domain is found at 8 to 165 (LRVGQLAPDF…TLRVLQAIQY (158 aa)). The Cysteine sulfenic acid (-SOH) intermediate role is filled by Cys-53.

The protein belongs to the peroxiredoxin family. AhpC/Prx1 subfamily. As to quaternary structure, homodimer; disulfide-linked, upon oxidation. Post-translationally, the Cys-53-SH group is the primary site of oxidation by H(2)O(2), and the oxidized Cys-53 (probably Cys-SOH) rapidly reacts with Cys-174-SH of the other subunit to form an intermolecular disulfide. This disulfide is subsequently reduced by thioredoxin.

The protein localises to the plastid. It localises to the chloroplast. The enzyme catalyses a hydroperoxide + [thioredoxin]-dithiol = an alcohol + [thioredoxin]-disulfide + H2O. Functionally, thiol-specific peroxidase that catalyzes the reduction of hydrogen peroxide and organic hydroperoxides to water and alcohols, respectively. Plays a role in cell protection against oxidative stress by detoxifying peroxides. The sequence is that of Putative peroxiredoxin ycf42 (ycf42) from Pyropia yezoensis (Susabi-nori).